Consider the following 442-residue polypeptide: Protein cereblon (442 aa).

The interval Met-1–Asn-45 is disordered. Residues Glu-24–Asp-35 show a composition bias toward acidic residues. Ser-25 is modified (phosphoserine). A Lon N-terminal domain is found at Ile-81–Thr-319. Positions Cys-318–Ile-426 constitute a CULT domain. Positions 323 and 326 each coordinate Zn(2+). (S)-thalidomide is bound by residues His-378, Trp-380, and Trp-386. Cys-391 and Cys-394 together coordinate Zn(2+).

The protein belongs to the CRBN family. Interacts with KCNT1. Component of a DCX (DDB1-CUL4-X-box) protein ligase complex, at least composed of CRBN, CUL4A, DDB1 and RBX1. Interacts directly with DDB1. Interacts (in pomalidomide-bound form) with IKZF1 and IKZF3. Interacts with ILF2. Interacts with TRAF6 and ECSIT. Post-translationally, ubiquitinated, ubiquitination is mediated by its own DCX protein ligase complex. Widely expressed. Highly expressed in brain.

Its subcellular location is the cytoplasm. It localises to the nucleus. It is found in the membrane. The protein operates within protein modification; protein ubiquitination. Functionally, substrate recognition component of a DCX (DDB1-CUL4-X-box) E3 protein ligase complex that mediates the ubiquitination and subsequent proteasomal degradation of target proteins, such as MEIS2, ILF2 or GLUL. Normal degradation of key regulatory proteins is required for normal limb outgrowth and expression of the fibroblast growth factor FGF8. Maintains presynaptic glutamate release and consequently cognitive functions, such as memory and learning, by negatively regulating large-conductance calcium-activated potassium (BK) channels in excitatory neurons. Likely to function by regulating the assembly and neuronal surface expression of BK channels via its interaction with KCNT1. May also be involved in regulating anxiety-like behaviors via a BK channel-independent mechanism. Plays a negative role in TLR4 signaling by interacting with TRAF6 and ECSIT, leading to inhibition of ECSIT ubiquitination, an important step of the signaling. The chain is Protein cereblon (CRBN) from Homo sapiens (Human).